A 561-amino-acid chain; its full sequence is Potassium-transporting ATPase potassium-binding subunit (561 aa).

12 consecutive transmembrane segments (helical) span residues 2–22, 66–86, 135–155, 177–197, 253–273, 280–300, 327–347, 354–374, 378–398, 413–433, 482–502, and 531–551; these read GQGL…TPVL, IRAI…LIYF, ALGF…IAFI, ILLP…VPQT, LIET…YGVF, AWLL…VAAG, FGWA…CGAV, LMPQ…IWGG, GTAY…LMVG, IVLA…PSAI, LSTS…MLLL, and AGIV…LGPI.

Belongs to the KdpA family. As to quaternary structure, the system is composed of three essential subunits: KdpA, KdpB and KdpC.

The protein localises to the cell inner membrane. Its function is as follows. Part of the high-affinity ATP-driven potassium transport (or Kdp) system, which catalyzes the hydrolysis of ATP coupled with the electrogenic transport of potassium into the cytoplasm. This subunit binds the periplasmic potassium ions and delivers the ions to the membrane domain of KdpB through an intramembrane tunnel. This chain is Potassium-transporting ATPase potassium-binding subunit, found in Nostoc sp. (strain PCC 7120 / SAG 25.82 / UTEX 2576).